The primary structure comprises 265 residues: Novel plant SNARE 12 (265 aa).

The Cytoplasmic segment spans residues 1 to 217 (MASELPMSPH…IGRQVATDKC (217 aa)). Residues 32-106 (LDKIKDSSRQ…ALRKTYLNTL (75 aa)) are a coiled coil. Residue serine 74 is modified to Phosphoserine. The 63-residue stretch at 146-208 (MKRMDETDQA…KKASQLVKEI (63 aa)) folds into the t-SNARE coiled-coil homology domain. A helical; Anchor for type IV membrane protein transmembrane segment spans residues 218 to 238 (IMAFLFLIVCGVIAIIIVKIV). At 239–265 (NPNNKDIRDIPGLAPPAQSRKLLYFRE) the chain is on the vesicular side.

It belongs to the novel plant SNARE family. As to expression, expressed in roots, stems, flower, siliques and leaves.

It localises to the membrane. In terms of biological role, vesicle trafficking protein that functions in the secretory pathway. This chain is Novel plant SNARE 12 (NPSN12), found in Arabidopsis thaliana (Mouse-ear cress).